Here is a 461-residue protein sequence, read N- to C-terminus: uncharacterized protein (461 aa).

The span at 1–19 (MEKCSHESGRHSAENDGKY) shows a compositional bias: basic and acidic residues. The disordered stretch occupies residues 1–21 (MEKCSHESGRHSAENDGKYDI).

This sequence belongs to the CapA family.

In terms of biological role, could be involved in the biosynthesis of a cell wall component. This is an uncharacterized protein from Sinorhizobium fredii (strain NBRC 101917 / NGR234).